We begin with the raw amino-acid sequence, 513 residues long: 2,3-bisphosphoglycerate-independent phosphoglycerate mutase (513 aa).

Positions 12 and 62 each coordinate Mn(2+). The active-site Phosphoserine intermediate is S62. Substrate contacts are provided by residues H123, 153–154 (RD), R185, R191, 260–263 (RPDR), and K333. D400, H404, D441, H442, and H460 together coordinate Mn(2+).

Belongs to the BPG-independent phosphoglycerate mutase family. Monomer. Mn(2+) is required as a cofactor.

The catalysed reaction is (2R)-2-phosphoglycerate = (2R)-3-phosphoglycerate. It functions in the pathway carbohydrate degradation; glycolysis; pyruvate from D-glyceraldehyde 3-phosphate: step 3/5. Functionally, catalyzes the interconversion of 2-phosphoglycerate and 3-phosphoglycerate. The protein is 2,3-bisphosphoglycerate-independent phosphoglycerate mutase of Clostridium tetani (strain Massachusetts / E88).